We begin with the raw amino-acid sequence, 359 residues long: 5-amino-6-(D-ribitylamino)uracil--L-tyrosine 4-hydroxyphenyl transferase (359 aa).

Positions 45–282 constitute a Radical SAM core domain; the sequence is VTYVVNANIN…TYAISRIFFK (238 aa). Cys-59, Cys-63, and Cys-66 together coordinate [4Fe-4S] cluster.

Belongs to the radical SAM superfamily. CofH family. In terms of assembly, consists of two subunits, CofG and CofH. It depends on [4Fe-4S] cluster as a cofactor.

The enzyme catalyses 5-amino-6-(D-ribitylamino)uracil + L-tyrosine + S-adenosyl-L-methionine = 5-amino-5-(4-hydroxybenzyl)-6-(D-ribitylimino)-5,6-dihydrouracil + 2-iminoacetate + 5'-deoxyadenosine + L-methionine + H(+). It participates in cofactor biosynthesis; coenzyme F0 biosynthesis. Its function is as follows. Catalyzes the radical-mediated synthesis of 5-amino-5-(4-hydroxybenzyl)-6-(D-ribitylimino)-5,6-dihydrouracil from 5-amino-6-(D-ribitylamino)uracil and L-tyrosine. In Methanococcus maripaludis (strain C5 / ATCC BAA-1333), this protein is 5-amino-6-(D-ribitylamino)uracil--L-tyrosine 4-hydroxyphenyl transferase.